The primary structure comprises 111 residues: Nucleoid-associated protein Cpar_0834 (111 aa).

The protein belongs to the YbaB/EbfC family. Homodimer.

The protein resides in the cytoplasm. It is found in the nucleoid. Binds to DNA and alters its conformation. May be involved in regulation of gene expression, nucleoid organization and DNA protection. The polypeptide is Nucleoid-associated protein Cpar_0834 (Chlorobaculum parvum (strain DSM 263 / NCIMB 8327) (Chlorobium vibrioforme subsp. thiosulfatophilum)).